The chain runs to 419 residues: Protein distal antenna-related (419 aa).

Positions 15-66 constitute an HTH psq-type domain; the sequence is TRGKRPLRNLTPNDKVRAIQRIHNGETKASVSRDIGVPESTLRGWCKNEQKL. The H-T-H motif DNA-binding region spans 42–62; the sequence is KASVSRDIGVPESTLRGWCKN. Disordered regions lie at residues 333–359 and 378–419; these read QPGGGGPGGPSYNPNQMASGGSEPDLE and EASN…DAEQ.

Interacts with itself, dan, ey and dac to form a complex (or complexes) containing the RD factors. As to expression, coexpressed with dan in the presumptive distal antenna, but not in the leg imaginal disk. Both proteins are also expressed in the brain and the eye region of the eye-antenna disk. First detected in early L3 eye disks in cells surrounding the newly initiated morphogenetic furrow. Highly expressed in evenly spaced clusters of cells anterior to the furrow, lower levels within and posterior to the furrow.

The protein localises to the nucleus. Functionally, probable transcription factor with a role in the retinal determination (RD) network. Regulates ato expression and is required for normal R8 induction and differentiation. Danr appears to repress Dan expression, but Dan is required for Danr expression anterior to the morphogenetic furrow (MF). Dan and Danr lie downstream of so and require dac function for highest levels of expression. Contributes to differentiation of antenna-specific characteristics; effector gene that acts downstream of homothorax (hth), Distal-less (Dll), cut (ct) and spineless (ss) genes to control differentiation of distal antennal structures. This is Protein distal antenna-related from Drosophila melanogaster (Fruit fly).